The following is a 131-amino-acid chain: Ribonuclease VapC3 (131 aa).

The 118-residue stretch at 4 to 121 folds into the PINc domain; that stretch reads VVDASAIAAL…GKLLTLDRQL (118 aa). Residues Asp6, Asp100, and Asp118 each coordinate Mg(2+).

This sequence belongs to the PINc/VapC protein family. Homodimer. Forms a complex with putative antitoxin VapB3, possibly VapB(2)-VapC(2). Mg(2+) serves as cofactor.

Its activity is regulated as follows. Inhibited by EDTA. Functionally, toxic component of a type II toxin-antitoxin (TA) system. Has ribonuclease activity. This is Ribonuclease VapC3 from Pyrobaculum aerophilum (strain ATCC 51768 / DSM 7523 / JCM 9630 / CIP 104966 / NBRC 100827 / IM2).